The sequence spans 530 residues: Ubiquitin carboxyl-terminal hydrolase 17-like protein 24 (530 aa).

One can recognise a USP domain in the interval 80–375; that stretch reads AGLQNMGNTC…QAYVLFYIQK (296 aa). Catalysis depends on cysteine 89, which acts as the Nucleophile. Histidine 334 serves as the catalytic Proton acceptor. Composition is skewed to basic and acidic residues over residues 382 to 392 and 398 to 412; these read SESVSRGREPR and DTDRRATQGELKRDH. 2 disordered regions span residues 382-412 and 477-530; these read SESVSRGREPRALGAEDTDRRATQGELKRDH and NHHP…LVCQ. Residues 493-505 are compositionally biased toward polar residues; sequence TPTHQESMNTGTL. Residues 510 to 524 are compositionally biased toward basic residues; that stretch reads GRARRSKGKNKHSKR.

This sequence belongs to the peptidase C19 family. USP17 subfamily. Expressed in heart, brain, liver and skeletal muscle.

It localises to the nucleus. It is found in the nucleolus. The protein localises to the endoplasmic reticulum. It carries out the reaction Thiol-dependent hydrolysis of ester, thioester, amide, peptide and isopeptide bonds formed by the C-terminal Gly of ubiquitin (a 76-residue protein attached to proteins as an intracellular targeting signal).. In terms of biological role, deubiquitinating enzyme that removes conjugated ubiquitin from specific proteins to regulate different cellular processes that may include cell proliferation, progression through the cell cycle, apoptosis, cell migration, and the cellular response to viral infection. This is Ubiquitin carboxyl-terminal hydrolase 17-like protein 24 (USP17L24) from Homo sapiens (Human).